The chain runs to 69 residues: DNA-directed RNA polymerase subunit epsilon (69 aa).

It belongs to the RNA polymerase subunit epsilon family. In terms of assembly, RNAP is composed of a core of 2 alpha, a beta and a beta' subunit. The core is associated with a delta subunit, and at least one of epsilon or omega. When a sigma factor is associated with the core the holoenzyme is formed, which can initiate transcription.

The enzyme catalyses RNA(n) + a ribonucleoside 5'-triphosphate = RNA(n+1) + diphosphate. In terms of biological role, a non-essential component of RNA polymerase (RNAP). This chain is DNA-directed RNA polymerase subunit epsilon, found in Bacillus pumilus (strain SAFR-032).